A 218-amino-acid polypeptide reads, in one-letter code: Small ribosomal subunit protein uS3 (218 aa).

The region spanning 38–106 (IREYINKRLQ…REHINIVEIK (69 aa)) is the KH type-2 domain.

Belongs to the universal ribosomal protein uS3 family. As to quaternary structure, part of the 30S ribosomal subunit. Forms a tight complex with proteins S10 and S14.

Its function is as follows. Binds the lower part of the 30S subunit head. Binds mRNA in the 70S ribosome, positioning it for translation. The sequence is that of Small ribosomal subunit protein uS3 from Geobacillus stearothermophilus (Bacillus stearothermophilus).